The chain runs to 810 residues: Exocyst complex component 6B (810 aa).

A coiled-coil region spans residues 79–118 (TELLKVRGEAQKLKNQVTDTNRKLQHEGKELVIAMEELKQ). Residues 258–282 (ESTSPKSEQDSGILDVEDEEDDEEV) are disordered. Positions 272–282 (DVEDEEDDEEV) are enriched in acidic residues.

Belongs to the SEC15 family. The exocyst complex is composed of SEC3, SEC5, SEC6, SEC8, SEC10, SEC15, EXO70 and EXO84.

Component of the exocyst complex involved in the docking of exocytic vesicles with fusion sites on the plasma membrane. The polypeptide is Exocyst complex component 6B (Exoc6b) (Mus musculus (Mouse)).